Reading from the N-terminus, the 145-residue chain is uncharacterized protein (145 aa).

Over residues 1–18 the composition is skewed to basic and acidic residues; that stretch reads MAEQQPSKEEKKEDKKDE. The tract at residues 1–61 is disordered; sequence MAEQQPSKEE…CTEGEWDASD (61 aa).

This is an uncharacterized protein from Caenorhabditis elegans.